A 254-amino-acid chain; its full sequence is 23S rRNA (guanosine-2'-O-)-methyltransferase RlmB (254 aa).

Residues glycine 198, isoleucine 218, and leucine 227 each contribute to the S-adenosyl-L-methionine site.

This sequence belongs to the class IV-like SAM-binding methyltransferase superfamily. RNA methyltransferase TrmH family. RlmB subfamily. Homodimer.

The protein localises to the cytoplasm. It catalyses the reaction guanosine(2251) in 23S rRNA + S-adenosyl-L-methionine = 2'-O-methylguanosine(2251) in 23S rRNA + S-adenosyl-L-homocysteine + H(+). In terms of biological role, specifically methylates the ribose of guanosine 2251 in 23S rRNA. In Blochmanniella floridana, this protein is 23S rRNA (guanosine-2'-O-)-methyltransferase RlmB.